We begin with the raw amino-acid sequence, 203 residues long: Large ribosomal subunit protein eL15 (203 aa).

Residues Ala-166 to Arg-203 are disordered. Basic residues predominate over residues Lys-169 to Lys-192. Residues Arg-193 to Arg-203 are compositionally biased toward polar residues.

Belongs to the eukaryotic ribosomal protein eL15 family.

In Aspergillus niger, this protein is Large ribosomal subunit protein eL15 (rpl15).